Reading from the N-terminus, the 456-residue chain is MDTIKLKEFYNSLVSIRRRVGHRRLGIAVSGGVDSMLLSWFMKESQIMFGWPNQFIAFVVDHRIRKNSTEEALQTIWNLNRMLIPNVYLNINWGNDDVHSLTNLETIAREHRYQVLTRACITHNIRHICTAHHANDQAETIFMRLLRRKPGTWGGLCAMKPVSQIPESDSICGASNIELLRPLLPYYKNQILNTAKQHGIAWEEDPTNADINLTPRNAIRRFLNQHAALTVEATKLATAFQSLQVNIDNKVDEILKDNIVSYHQPSGTLSLCFSKNELKKHSNLTKEELLLRCLTLTTSCRQIKRSSVVSLCNSVFDGKKLTIAKCLLTSSSIKDDTKLQLQISRQPFSKAELKKKTITINPDRYVLWDHRFWIKYSCKNTQTTLILRPLLSKDLNSLKGFLSKEEFLKFCIQVPGHIRFTIPVLSEENDKLVGIPTFGFNFRSDIISNCLHKFKL.

Residue 30-35 participates in ATP binding; it reads SGGVDS.

The protein belongs to the tRNA(Ile)-lysidine synthase family.

Its subcellular location is the cytoplasm. The catalysed reaction is cytidine(34) in tRNA(Ile2) + L-lysine + ATP = lysidine(34) in tRNA(Ile2) + AMP + diphosphate + H(+). Functionally, ligates lysine onto the cytidine present at position 34 of the AUA codon-specific tRNA(Ile) that contains the anticodon CAU, in an ATP-dependent manner. Cytidine is converted to lysidine, thus changing the amino acid specificity of the tRNA from methionine to isoleucine. The chain is Probable tRNA(Ile)-lysidine synthase from Schizosaccharomyces pombe (strain 972 / ATCC 24843) (Fission yeast).